The primary structure comprises 453 residues: Bifunctional protein GlmU (453 aa).

The segment at 1-228 (MPHWAAVIMA…VHEALGINSR (228 aa)) is pyrophosphorylase. UDP-N-acetyl-alpha-D-glucosamine is bound by residues Lys23, Gln73, 78–79 (GT), 100–102 (SGD), Gly139, Glu153, Asn168, and Asn226. Residue Asp102 participates in Mg(2+) binding. Asn226 is a Mg(2+) binding site. The tract at residues 229-249 (AQLAAAEDVARQRILSYWMEE) is linker. Positions 250–453 (GVTIIDPRST…IENWVRNKKK (204 aa)) are N-acetyltransferase. UDP-N-acetyl-alpha-D-glucosamine contacts are provided by Arg331 and Lys349. His361 serves as the catalytic Proton acceptor. Residues Tyr364 and Asn375 each contribute to the UDP-N-acetyl-alpha-D-glucosamine site. Acetyl-CoA-binding positions include Ala378, 384–385 (NY), Ser403, Ala421, and Arg438.

This sequence in the N-terminal section; belongs to the N-acetylglucosamine-1-phosphate uridyltransferase family. It in the C-terminal section; belongs to the transferase hexapeptide repeat family. As to quaternary structure, homotrimer. Mg(2+) is required as a cofactor.

Its subcellular location is the cytoplasm. It catalyses the reaction alpha-D-glucosamine 1-phosphate + acetyl-CoA = N-acetyl-alpha-D-glucosamine 1-phosphate + CoA + H(+). The catalysed reaction is N-acetyl-alpha-D-glucosamine 1-phosphate + UTP + H(+) = UDP-N-acetyl-alpha-D-glucosamine + diphosphate. It functions in the pathway nucleotide-sugar biosynthesis; UDP-N-acetyl-alpha-D-glucosamine biosynthesis; N-acetyl-alpha-D-glucosamine 1-phosphate from alpha-D-glucosamine 6-phosphate (route II): step 2/2. It participates in nucleotide-sugar biosynthesis; UDP-N-acetyl-alpha-D-glucosamine biosynthesis; UDP-N-acetyl-alpha-D-glucosamine from N-acetyl-alpha-D-glucosamine 1-phosphate: step 1/1. The protein operates within bacterial outer membrane biogenesis; LPS lipid A biosynthesis. In terms of biological role, catalyzes the last two sequential reactions in the de novo biosynthetic pathway for UDP-N-acetylglucosamine (UDP-GlcNAc). The C-terminal domain catalyzes the transfer of acetyl group from acetyl coenzyme A to glucosamine-1-phosphate (GlcN-1-P) to produce N-acetylglucosamine-1-phosphate (GlcNAc-1-P), which is converted into UDP-GlcNAc by the transfer of uridine 5-monophosphate (from uridine 5-triphosphate), a reaction catalyzed by the N-terminal domain. This chain is Bifunctional protein GlmU, found in Desulfitobacterium hafniense (strain Y51).